The following is a 292-amino-acid chain: Elongation factor Ts (292 aa).

An involved in Mg(2+) ion dislocation from EF-Tu region spans residues 79-82; it reads TDFV.

This sequence belongs to the EF-Ts family.

It is found in the cytoplasm. Its function is as follows. Associates with the EF-Tu.GDP complex and induces the exchange of GDP to GTP. It remains bound to the aminoacyl-tRNA.EF-Tu.GTP complex up to the GTP hydrolysis stage on the ribosome. The protein is Elongation factor Ts of Xylella fastidiosa (strain Temecula1 / ATCC 700964).